Reading from the N-terminus, the 917-residue chain is MAASVDNRQYARLEPGLNGVVRSYKPPVPGRSDSPKAHQNQTTNQTVFLKPAKVHDDDEDVSSEDENETHNSNAVYYKEMIRKSNAELEPSVLDPRDEYTADSWIERNPSMVRLTGKHPFNSEAPLNRLMHHGFITPVPLHYVRNHGHVPKAQWAEWTVEVTGFVKRPMKFTMDQLVSEFAYREFAATLVCAGNRRKEQNMVKKSKGFNWGSAGVSTSVWRGVPLCDVLRRCGIFSRKGGALNVCFEGSEDLPGGAGTAGSKYGTSIKKEYAMDPSRDIILAYMQNGEYLTPDHGFPVRIIIPGFIGGRMVKWLKRIIVTTKESDNFYHFKDNRVLPSLVDAELADEEGWWYKPEYIINELNINSVITTPCHEEILPINAFTTQRPYTLKGYAYSGGGKKVTRVEVTVDGGETWNVCALDHQEKPNKYGKFWCWCFWSLEVEVLDLLSAKEIAVRAWDETLNTQPEKMIWNLMGMMNNCWFRVKTNVCKPHKGEIGIVFEHPTLPGNESGGWMAKERHLEKSADAPPSLKKSVSTPFMNTTAKMYSMSEVKKHNSADSCWIIVHGHIYDCTRFLMDHPGGSDSILINAGTDCTEEFEAIHSDKAKKMLEDYRIGELITTGYSSDSSSPNNSVHGSSAVFSLLAPIGEATPVRNLALVNPRAKVPVQLVEKTSISHDVRKFRFALPVEDMVLGLPVGKHIFLCATINDKLCLRAYTPSSTVDVVGYFELVVKIYFGGVHPRFPNGGLMSQYLDSLPIGSTLEIKGPLGHVEYLGKGSFTVHGKPKFADKLAMLAGGTGITPVYQIIQAILKDPEDETEMYVIYANRTEEDILLREELDGWAEQYPDRLKVWYVVESAKEGWAYSTGFISEAIMREHIPDGLDGSALAMACGPPPMIQFAVQPNLEKMQYNIKEDFLIF.

Positions 1 to 72 are disordered; the sequence is MAASVDNRQY…SEDENETHNS (72 aa). Over residues 37–47 the composition is skewed to polar residues; sequence AHQNQTTNQTV. Positions 57-67 are enriched in acidic residues; it reads DDEDVSSEDEN. Cys-191 is a binding site for Mo-molybdopterin. A Cytochrome b5 heme-binding domain is found at 542-617; sequence AKMYSMSEVK…LEDYRIGELI (76 aa). Heme is bound by residues His-577 and His-600. In terms of domain architecture, FAD-binding FR-type spans 660 to 772; the sequence is RAKVPVQLVE…KGPLGHVEYL (113 aa). FAD-binding positions include 712–715, 729–733, Phe-734, Phe-741, 746–748, and Thr-799; these read RAYT, VVKIY, and LMS.

The protein belongs to the nitrate reductase family. In terms of assembly, homodimer. The cofactor is FAD. Heme is required as a cofactor. Mo-molybdopterin serves as cofactor. As to expression, root, leaf, and shoot.

It carries out the reaction nitrite + NAD(+) + H2O = nitrate + NADH + H(+). Nitrate reductase is a key enzyme involved in the first step of nitrate assimilation in plants, fungi and bacteria. In Arabidopsis thaliana (Mouse-ear cress), this protein is Nitrate reductase [NADH] 2 (NIA2).